The primary structure comprises 270 residues: uncharacterized protein (270 aa).

This is an uncharacterized protein from Escherichia coli (strain K12).